The following is a 304-amino-acid chain: N-acetyl-D-glucosamine kinase (304 aa).

ATP-binding positions include 4–11 (GFDMGGTK) and 133–140 (GVGGGLIV). Residues H157, C177, C179, and C184 each contribute to the Zn(2+) site.

The protein belongs to the ROK (NagC/XylR) family. NagK subfamily.

It carries out the reaction N-acetyl-D-glucosamine + ATP = N-acetyl-D-glucosamine 6-phosphate + ADP + H(+). It functions in the pathway cell wall biogenesis; peptidoglycan recycling. Functionally, catalyzes the phosphorylation of N-acetyl-D-glucosamine (GlcNAc) derived from cell-wall degradation, yielding GlcNAc-6-P. In Yersinia pseudotuberculosis serotype O:1b (strain IP 31758), this protein is N-acetyl-D-glucosamine kinase.